The chain runs to 293 residues: uncharacterized protein (293 aa).

The next 7 helical transmembrane spans lie at 55 to 75, 77 to 97, 110 to 130, 138 to 158, 164 to 184, 193 to 213, and 226 to 246; these read FLLC…VFLC, TGFM…LLHG, PGLL…ASAC, FSGL…GLAG, WQVI…ALYL, LFLG…VFDT, and LLTL…LILF. Asparagine 287 carries an N-linked (GlcNAc...) asparagine; by host glycan.

Belongs to the cytomegalovirus US12 family.

The protein localises to the membrane. This is an uncharacterized protein from Human cytomegalovirus (strain AD169) (HHV-5).